Reading from the N-terminus, the 147-residue chain is Calcium-regulated heat stable protein 1 (147 aa).

Positions 1 to 12 (MSSEPPPPPQPP) are enriched in pro residues. The disordered stretch occupies residues 1-49 (MSSEPPPPPQPPTHQTSIGLLDTPRARDRSPSPLRGNVVPSPLPTRRTR). An N-acetylserine modification is found at S2. S30, S32, and S41 each carry phosphoserine. Residue T45 is modified to Phosphothreonine. A phosphoserine mark is found at S52 and S58. Residues 62 to 129 (VYKGVCKCFC…KLQAVEVVIT (68 aa)) enclose the CSD domain. S146 and S147 each carry phosphoserine.

In terms of assembly, homodimer. Interacts with STYX. In terms of processing, can be phosphorylated by DYRK2 (in vitro). Dephosphorylated by calcineurin in a Ca(2+) dependent manner, and probably by PP2A or PP4 serine phosphatases in cAMP- and PKC-mediated pathways. Widely expressed.

The protein localises to the cytoplasm. It is found in the P-body. Its subcellular location is the cytoplasmic granule. In terms of biological role, binds mRNA and regulates the stability of target mRNA. In Rattus norvegicus (Rat), this protein is Calcium-regulated heat stable protein 1 (Carhsp1).